Here is a 215-residue protein sequence, read N- to C-terminus: Protein Nef (215 aa).

G2 carries the N-myristoyl glycine; by host lipid modification. A Phosphoserine; by host modification is found at S6. The tract at residues 71 to 74 (EEEE) is acidic; interacts with host PACS1 and PACS2; stabilizes the interaction of NEF/MHC-I with host AP1M1; necessary for MHC-I internalization. The SH3-binding; interaction with Src family tyrosine kinases stretch occupies residues 78–87 (PVRPQVPLRP). Residues 81 to 84 (PQVP) carry the PxxP; stabilizes the interaction of NEF/MHC-I with host AP1M1; necessary for MHC-I internalization motif. The mediates dimerization, Nef-PTE1 interaction stretch occupies residues 117–133 (EILDLWVYHTQGFFPDW). The segment at 157-189 (VDPAEVEETTEGEDNCLLHPINQHGMEDEHREI) is binding to ATP6V1H. The short motif at 173 to 174 (LL) is the Dileucine internalization motif; necessary for CD4 internalization element. Residues 183–184 (ED) carry the Diacidic; necessary for CD4 internalization motif.

The protein belongs to the lentivirus primate group Nef protein family. Monomer; cytosolic form. Homodimer; membrane bound form. Interacts with Nef associated p21-activated kinase (PAK2); this interaction activates PAK2. Associates with the Nef-MHC-I-AP1 complex; this complex is required for MHC-I internalization. Interacts (via C-terminus) with host PI3-kinase. Interacts with host PACS1; this interaction seems to be weak. Interacts with host PACS2. Interacts with host LCK and MAPK3; these interactions inhibit the kinase activity of the latter. Interacts with host ATP6V1H; this interaction may play a role in CD4 endocytosis. Associates with the CD4-Nef-AP2 complex; this complex is required for CD4 internalization. Interacts with host AP2 subunit alpha and AP2 subunit sigma2. Interacts with TCR-zeta chain; this interaction up-regulates the Fas ligand (FasL) surface expression. Interacts with host HCK, LYN, and SRC; these interactions activate the Src family kinases. Interacts with MAP3K5; this interaction inhibits the Fas and TNFR-mediated death signals. Interacts with beta-COP and PTE1. Interacts with human RACK1; this increases Nef phosphorylation by PKC. Interacts with TP53; this interaction decreases the half-life of TP53, protecting the infected cell against p53-mediated apoptosis. In terms of processing, the virion-associated Nef proteins are cleaved by the viral protease to release the soluble C-terminal core protein. Nef is probably cleaved concomitantly with viral structural proteins on maturation of virus particles. Post-translationally, myristoylated. Phosphorylated on serine residues, probably by host PKCdelta and theta.

It is found in the host cell membrane. The protein resides in the virion. The protein localises to the secreted. Its subcellular location is the host Golgi apparatus membrane. Functionally, factor of infectivity and pathogenicity, required for optimal virus replication. Alters numerous pathways of T-lymphocyte function and down-regulates immunity surface molecules in order to evade host defense and increase viral infectivity. Alters the functionality of other immunity cells, like dendritic cells, monocytes/macrophages and NK cells. In terms of biological role, in infected CD4(+) T-lymphocytes, down-regulates the surface MHC-I, mature MHC-II, CD4, CD28, CCR5 and CXCR4 molecules. Mediates internalization and degradation of host CD4 through the interaction of with the cytoplasmic tail of CD4, the recruitment of AP-2 (clathrin adapter protein complex 2), internalization through clathrin coated pits, and subsequent transport to endosomes and lysosomes for degradation. Diverts host MHC-I molecules to the trans-Golgi network-associated endosomal compartments by an endocytic pathway to finally target them for degradation. MHC-I down-regulation may involve AP-1 (clathrin adapter protein complex 1) or possibly Src family kinase-ZAP70/Syk-PI3K cascade recruited by PACS2. In consequence infected cells are masked for immune recognition by cytotoxic T-lymphocytes. Decreasing the number of immune receptors also prevents reinfection by more HIV particles (superinfection). Down-regulates host SERINC3 and SERINC5 thereby excluding these proteins from the viral particles. Virion infectivity is drastically higher when SERINC3 or SERINC5 are excluded from the viral envelope, because these host antiviral proteins impair the membrane fusion event necessary for subsequent virion penetration. Bypasses host T-cell signaling by inducing a transcriptional program nearly identical to that of anti-CD3 cell activation. Interaction with TCR-zeta chain up-regulates the Fas ligand (FasL). Increasing surface FasL molecules and decreasing surface MHC-I molecules on infected CD4(+) cells send attacking cytotoxic CD8+ T-lymphocytes into apoptosis. Its function is as follows. Plays a role in optimizing the host cell environment for viral replication without causing cell death by apoptosis. Protects the infected cells from apoptosis in order to keep them alive until the next virus generation is ready to strike. Inhibits the Fas and TNFR-mediated death signals by blocking MAP3K5/ASK1. Decreases the half-life of TP53, protecting the infected cell against p53-mediated apoptosis. Inhibits the apoptotic signals regulated by the Bcl-2 family proteins through the formation of a Nef/PI3-kinase/PAK2 complex that leads to activation of PAK2 and induces phosphorylation of host BAD. Functionally, extracellular Nef protein targets CD4(+) T-lymphocytes for apoptosis by interacting with CXCR4 surface receptors. The protein is Protein Nef of Human immunodeficiency virus type 1 group M subtype K (isolate 96CM-MP535) (HIV-1).